Consider the following 153-residue polypeptide: MINQGLFIRVNNFQLLKASLAYKKASNILTFPPIRTSTKHGGGSSKNTGDSAGRRLGIKRSENQFVRAGEILIRQRGTKFHPGDNTGLGKDHTIYSLVSGYVKFFQMDVSLRKRRKYVGVVFDKETTLPRPKDEPTIRRVNKYITSANSAQVS.

The transit peptide at 1-37 directs the protein to the mitochondrion; sequence MINQGLFIRVNNFQLLKASLAYKKASNILTFPPIRTS. The interval 34–57 is disordered; it reads IRTSTKHGGGSSKNTGDSAGRRLG.

It belongs to the bacterial ribosomal protein bL27 family. Component of the mitochondrial large ribosomal subunit (mt-LSU). Mature yeast 74S mitochondrial ribosomes consist of a small (37S) and a large (54S) subunit. The 37S small subunit contains a 15S ribosomal RNA (15S mt-rRNA) and at least 32 different proteins. The 54S large subunit contains a 21S rRNA (21S mt-rRNA) and at least 45 different proteins.

It localises to the mitochondrion. Component of the mitochondrial ribosome (mitoribosome), a dedicated translation machinery responsible for the synthesis of mitochondrial genome-encoded proteins, including at least some of the essential transmembrane subunits of the mitochondrial respiratory chain. The mitoribosomes are attached to the mitochondrial inner membrane and translation products are cotranslationally integrated into the membrane. This chain is Large ribosomal subunit protein bL27m (mrp7), found in Schizosaccharomyces pombe (strain 972 / ATCC 24843) (Fission yeast).